Here is a 280-residue protein sequence, read N- to C-terminus: Energy-coupling factor transporter ATP-binding protein EcfA1 (280 aa).

Positions 6–241 (LRTENISFQY…SHMLQEIGLD (236 aa)) constitute an ABC transporter domain. 40-47 (GQNGSGKS) provides a ligand contact to ATP.

The protein belongs to the ABC transporter superfamily. Energy-coupling factor EcfA family. Forms a stable energy-coupling factor (ECF) transporter complex composed of 2 membrane-embedded substrate-binding proteins (S component), 2 ATP-binding proteins (A component) and 2 transmembrane proteins (T component).

It is found in the cell membrane. Functionally, ATP-binding (A) component of a common energy-coupling factor (ECF) ABC-transporter complex. Unlike classic ABC transporters this ECF transporter provides the energy necessary to transport a number of different substrates. The polypeptide is Energy-coupling factor transporter ATP-binding protein EcfA1 (Bacillus thuringiensis subsp. konkukian (strain 97-27)).